The following is a 279-amino-acid chain: Dehydrogenase/reductase SDR family member 4 (279 aa).

L37 to V61 is an NADP(+) binding site. Position 93 is an N6-acetyllysine; alternate (K93). N6-succinyllysine; alternate is present on K93. Position 106 is an N6-acetyllysine (K106). Residue S170 participates in substrate binding. The active-site Proton acceptor is Y183. Residue K187 participates in NADP(+) binding. K217 carries the post-translational modification N6-acetyllysine; alternate. N6-succinyllysine; alternate is present on K217. S221 is modified (phosphoserine). N6-succinyllysine is present on residues K228 and K235. The Peroxisomal targeting signal motif lies at S277 to L279.

The protein belongs to the short-chain dehydrogenases/reductases (SDR) family. Homotetramer.

The protein resides in the peroxisome. It catalyses the reaction a secondary alcohol + NADP(+) = a ketone + NADPH + H(+). The enzyme catalyses 3alpha-hydroxy-5beta-pregnan-20-one + NADP(+) = 5beta-pregnan-3,20-dione + NADPH + H(+). The catalysed reaction is 5beta-dihydrotestosterone + NADPH + H(+) = 5beta-androstane-3alpha,17beta-diol + NADP(+). It carries out the reaction all-trans-retinol + NADP(+) = all-trans-retinal + NADPH + H(+). It catalyses the reaction isatin + NADPH + H(+) = 3-hydroxyindolin-2-one + NADP(+). Its function is as follows. NADPH-dependent oxidoreductase which catalyzes the reduction of a variety of compounds bearing carbonyl groups including ketosteroids, alpha-dicarbonyl compounds, aldehydes, aromatic ketones and quinones. Reduces all-trans-retinal and 9-cis retinal. Reduces 3-ketosteroids and benzil into 3alpha-hydroxysteroids and S-benzoin, respectively, in contrast to the stereoselectivity of primates DHRS4s which produce 3beta-hydroxysteroids and R-benzoin. In the reverse reaction, catalyzes the NADP-dependent oxidation of 3alpha-hydroxysteroids and alcohol, but with much lower efficiency. Involved in the metabolism of 3alpha-hydroxysteroids, retinoid, isatin and xenobiotic carbonyl compounds. The chain is Dehydrogenase/reductase SDR family member 4 (Dhrs4) from Rattus norvegicus (Rat).